The primary structure comprises 419 residues: Divergent protein kinase domain 1C (419 aa).

Residues 1 to 22 are Cytoplasmic-facing; the sequence is MARAAGARGPAGWCRRRGRCGR. Positions 16–17 match the May mediate ER retention motif; that stretch reads RR. A helical transmembrane segment spans residues 23–43; it reads GTLLAFAAWTAGWVLAAALLL. The Lumenal segment spans residues 44-419; it reads RAHPGVLSER…TLRELQEAEK (376 aa).

Belongs to the DIPK family. Among the many cysteines in the lumenal domain, most are probably involved in disulfide bonds.

The protein resides in the endoplasmic reticulum membrane. This Homo sapiens (Human) protein is Divergent protein kinase domain 1C.